Consider the following 387-residue polypeptide: 3-ketoacyl-CoA thiolase (387 aa).

Cys91 serves as the catalytic Acyl-thioester intermediate. Active-site proton acceptor residues include His343 and Cys373.

The protein belongs to the thiolase-like superfamily. Thiolase family. As to quaternary structure, heterotetramer of two alpha chains (FadB) and two beta chains (FadA).

It localises to the cytoplasm. It catalyses the reaction an acyl-CoA + acetyl-CoA = a 3-oxoacyl-CoA + CoA. It functions in the pathway lipid metabolism; fatty acid beta-oxidation. Functionally, catalyzes the final step of fatty acid oxidation in which acetyl-CoA is released and the CoA ester of a fatty acid two carbons shorter is formed. The sequence is that of 3-ketoacyl-CoA thiolase from Shewanella frigidimarina (strain NCIMB 400).